A 229-amino-acid polypeptide reads, in one-letter code: Acetylcholine-binding protein (229 aa).

An N-terminal signal peptide occupies residues 1-19; the sequence is MRRNIFCLACLWIVQACLS. Asn85 carries an N-linked (GlcNAc...) asparagine glycan. Residues 114 to 217 enclose the Ig-like domain; sequence PEVLTPQLAR…PEAYEDVEVS (104 aa). An intrachain disulfide couples Cys142 to Cys155.

As to quaternary structure, homopentamer. In terms of processing, N-glycosylated. Expressed by glial cells.

It localises to the synaptic cleft. In terms of biological role, binds to acetylcholine. Modulates neuronal synaptic transmission. This Lymnaea stagnalis (Great pond snail) protein is Acetylcholine-binding protein.